The chain runs to 47 residues: Cytochrome b559 subunit beta (47 aa).

The helical transmembrane segment at tryptophan 23–alanine 39 threads the bilayer. Residue histidine 27 coordinates heme.

It belongs to the PsbE/PsbF family. In terms of assembly, heterodimer of an alpha subunit and a beta subunit. PSII is composed of 1 copy each of membrane proteins PsbA, PsbB, PsbC, PsbD, PsbE, PsbF, PsbH, PsbI, PsbJ, PsbK, PsbL, PsbM, PsbT, PsbX, PsbY, Psb30/Ycf12, peripheral proteins PsbO, CyanoQ (PsbQ), PsbU, PsbV and a large number of cofactors. It forms dimeric complexes. Requires heme b as cofactor.

The protein resides in the cellular thylakoid membrane. Its function is as follows. This b-type cytochrome is tightly associated with the reaction center of photosystem II (PSII). PSII is a light-driven water:plastoquinone oxidoreductase that uses light energy to abstract electrons from H(2)O, generating O(2) and a proton gradient subsequently used for ATP formation. It consists of a core antenna complex that captures photons, and an electron transfer chain that converts photonic excitation into a charge separation. This Prochlorococcus marinus subsp. pastoris (strain CCMP1986 / NIES-2087 / MED4) protein is Cytochrome b559 subunit beta.